We begin with the raw amino-acid sequence, 250 residues long: MTQLYRIGQIVPSSNTTMETEIPAMLNARQAIRPERFTFHSSRMRMKQVKKEELAAMDAESDRCAVELSDAKVDVLGYACLVAIMAMGLGYHRQSEKRLQQATADNDALAPVITSAGALVEALHVMKAKRIAIVAPYMKPLTELVVNYIREEGFEVQDWRALEIPDNLAVARHDPANLPGIVAGMDLEGVDVVVLSACVQMQSLPAVAKVEAQTGKPVVTAAIATTYAMLKALDLEPIVPGAGALLSGAY.

Residues Asn15, 80–82, Tyr137, and Asn167 each bind substrate; that span reads CLV. Cys80 acts as the Nucleophile in catalysis. An S-(2-succinyl)cysteine modification is found at Cys80. Cys198 acts as the Proton donor in catalysis. 199–200 contributes to the substrate binding site; that stretch reads VQ.

This sequence belongs to the maleate isomerase family. As to quaternary structure, homodimer.

It carries out the reaction maleate = fumarate. Its pathway is cofactor degradation; nicotinate degradation. Its function is as follows. Catalyzes cis-trans isomerization of the C2-C3 double bond in maleate to yield fumarate in the aerobic nicotinate degradation pathway. This is Maleate isomerase from Pseudomonas putida (strain ATCC 47054 / DSM 6125 / CFBP 8728 / NCIMB 11950 / KT2440).